The chain runs to 212 residues: GrpE protein homolog, mitochondrial (212 aa).

It belongs to the GrpE family. Component of the PAM complex, at least composed of mtHsp70, MGE1, TIM44, PAM16, PAM17 and PAM18.

The protein localises to the mitochondrion matrix. Essential component of the PAM complex, a complex required for the translocation of transit peptide-containing proteins from the inner membrane into the mitochondrial matrix in an ATP-dependent manner. Seems to control the nucleotide-dependent binding of SSC1 to substrate proteins. This Eremothecium gossypii (strain ATCC 10895 / CBS 109.51 / FGSC 9923 / NRRL Y-1056) (Yeast) protein is GrpE protein homolog, mitochondrial (mge1).